Reading from the N-terminus, the 462-residue chain is DNA polymerase delta subunit 3 (462 aa).

Ala-2 carries the post-translational modification N-acetylalanine. Disordered stretches follow at residues Ala-144–Gln-186, Thr-200–Gly-230, Ala-254–Lys-384, and Ser-403–Lys-462. A compositionally biased stretch (polar residues) spans Gln-156–Gly-174. The span at Asp-204 to Glu-215 shows a compositional bias: basic and acidic residues. Residues Ser-218–Gly-230 are compositionally biased toward low complexity. Lys-256 participates in a covalent cross-link: Glycyl lysine isopeptide (Lys-Gly) (interchain with G-Cter in SUMO); alternate. A Glycyl lysine isopeptide (Lys-Gly) (interchain with G-Cter in SUMO2); alternate cross-link involves residue Lys-256. A Glycyl lysine isopeptide (Lys-Gly) (interchain with G-Cter in SUMO2) cross-link involves residue Lys-259. Over residues Arg-284 to Leu-305 the composition is skewed to basic and acidic residues. Ser-306 carries the post-translational modification Phosphoserine. The segment covering Ser-330–Glu-344 has biased composition (acidic residues). Residues Pro-348–Val-368 show a composition bias toward pro residues. Residues Ser-403 and Ser-405 each carry the phosphoserine modification. Thr-407 carries the phosphothreonine modification. The residue at position 409 (Ser-409) is a Phosphoserine. Residues Lys-416 to Ala-427 show a composition bias toward low complexity. Residues Val-428–Lys-437 are compositionally biased toward basic and acidic residues. Lys-429 is covalently cross-linked (Glycyl lysine isopeptide (Lys-Gly) (interchain with G-Cter in SUMO); alternate). Residue Lys-429 forms a Glycyl lysine isopeptide (Lys-Gly) (interchain with G-Cter in SUMO2); alternate linkage. Residues Arg-451–Lys-462 are compositionally biased toward polar residues. The PIP-box signature appears at Gln-452–Phe-459. Residue Ser-454 is modified to Phosphoserine.

In terms of assembly, component of both the DNA polymerase delta and DNA polymerase zeta complexes. The tetrameric DNA polymerase delta complex (Pol-delta4), which consists of POLD1/p125, POLD2/p50, POLD3/p66/p68 and POLD4/p12, with POLD1 bearing DNA polymerase and 3' to 5' proofreading exonuclease activities. Within this complex, directly interacts with POLD2. Following stress caused by DNA damaging agents or by replication stress, POLD4 is degraded and Pol-delta4 is converted into a trimeric form of the complex (Pol-delta3), which consists of POLD1, POLD2 and POLD3. Pol-delta3 is the major form occurring at S phase replication sites, as well as DNA damage sites. Directly interacts with PCNA, as do POLD1 and POLD4; this interaction stimulates Pol-delta polymerase activity. POLD3 phosphorylation at Ser-454 impairs PCNA binding. Component of the DNA polymerase zeta complex (POLZ), which consists of REV3L, MAD2L2, POLD2 and POLD3, with REV3L bearing DNA polymerase catalytic activity. The DNA polymerase delta complex interacts with POLDIP2; this interaction is probably mediated through direct binding to POLD2. Post-translationally, ubiquitinated, but not targeted to the proteasome. Sumoylated. Sumoylation by SUMO3 may be predominant. Phosphorylation at Ser-454 is thought to decrease the affinity for PCNA and Pol-delta4 processivity. May be phosphorylated by CDK1-cyclin-A complex, as well as CDK2-cyclin-A and CDK2-cyclin-E complexes. PCNA interferes with CDK-cyclin phosphorylation.

It is found in the cytoplasm. It localises to the nucleus. In terms of biological role, accessory component of both the DNA polymerase delta complex and the DNA polymerase zeta complex. As a component of the trimeric and tetrameric DNA polymerase delta complexes (Pol-delta3 and Pol-delta4, respectively), plays a role in high fidelity genome replication, including in lagging strand synthesis, and repair. Required for optimal Pol-delta activity. Stabilizes the Pol-delta complex and plays a major role in Pol-delta stimulation by PCNA. Pol-delta3 and Pol-delta4 are characterized by the absence or the presence of POLD4. They exhibit differences in catalytic activity. Most notably, Pol-delta3 shows higher proofreading activity than Pol-delta4. Although both Pol-delta3 and Pol-delta4 process Okazaki fragments in vitro, Pol-delta3 may also be better suited to fulfill this task, exhibiting near-absence of strand displacement activity compared to Pol-delta4 and stalling on encounter with the 5'-blocking oligonucleotides. Pol-delta3 idling process may avoid the formation of a gap, while maintaining a nick that can be readily ligated. Along with DNA polymerase kappa, DNA polymerase delta carries out approximately half of nucleotide excision repair (NER) synthesis following UV irradiation. In this context, POLD3, along with PCNA and RFC1-replication factor C complex, is required to recruit POLD1, the catalytic subunit of the polymerase delta complex, to DNA damage sites. Under conditions of DNA replication stress, required for the repair of broken replication forks through break-induced replication (BIR). Involved in the translesion synthesis (TLS) of templates carrying O6-methylguanine or abasic sites performed by Pol-delta4, independently of DNA polymerase zeta (REV3L) or eta (POLH). Facilitates abasic site bypass by DNA polymerase delta by promoting extension from the nucleotide inserted opposite the lesion. Also involved in TLS, as a component of the tetrameric DNA polymerase zeta complex. Along with POLD2, dramatically increases the efficiency and processivity of DNA synthesis of the DNA polymerase zeta complex compared to the minimal zeta complex, consisting of only REV3L and REV7. This chain is DNA polymerase delta subunit 3 (Pold3), found in Mus musculus (Mouse).